Consider the following 334-residue polypeptide: Glycerol-1-phosphate dehydrogenase [NAD(P)+] (334 aa).

Residues 77 to 81 (GRPID) and 99 to 102 (TTAS) each bind NAD(+). Asp104 is a binding site for substrate. Position 108 (Ser108) interacts with NAD(+). Asp147 serves as a coordination point for substrate. Residues Asp147 and His225 each contribute to the Zn(2+) site. His229 is a substrate binding site. Position 246 (His246) interacts with Zn(2+).

Belongs to the glycerol-1-phosphate dehydrogenase family. Zn(2+) serves as cofactor.

It localises to the cytoplasm. It carries out the reaction sn-glycerol 1-phosphate + NAD(+) = dihydroxyacetone phosphate + NADH + H(+). It catalyses the reaction sn-glycerol 1-phosphate + NADP(+) = dihydroxyacetone phosphate + NADPH + H(+). Its pathway is membrane lipid metabolism; glycerophospholipid metabolism. Catalyzes the NAD(P)H-dependent reduction of dihydroxyacetonephosphate (DHAP or glycerone phosphate) to glycerol 1-phosphate (G1P). The G1P thus generated is used as the glycerophosphate backbone of phospholipids in the cellular membranes of Archaea. The sequence is that of Glycerol-1-phosphate dehydrogenase [NAD(P)+] from Methanococcus maripaludis (strain C5 / ATCC BAA-1333).